A 915-amino-acid polypeptide reads, in one-letter code: Alpha-xylosidase 1 (915 aa).

The signal sequence occupies residues 1-27 (MASSSSSLAFSLSLLLALILCFSPTQS). Residues asparagine 153, asparagine 304, and asparagine 375 are each glycosylated (N-linked (GlcNAc...) asparagine). Catalysis depends on residues aspartate 440 and glutamate 443. Residues asparagine 476 and asparagine 490 are each glycosylated (N-linked (GlcNAc...) asparagine). Aspartate 563 serves as the catalytic Proton donor. N-linked (GlcNAc...) asparagine glycans are attached at residues asparagine 819, asparagine 888, and asparagine 907.

Belongs to the glycosyl hydrolase 31 family. In terms of tissue distribution, expressed in roots, stems, leaves, flowers and siliques. Expressed in cell types undergoing cell wall modifications, including trichomes, vasculature, stomata, and elongating anther filaments. Not detected in pollen.

The protein resides in the secreted. It localises to the cell wall. Its subcellular location is the extracellular space. It is found in the apoplast. The catalysed reaction is Hydrolysis of terminal, non-reducing alpha-D-xylose residues with release of alpha-D-xylose.. Functionally, glycoside hydrolase releasing xylosyl residues from xyloglucan oligosaccharides at the non-reducing end. Has alpha-xylosidase activity against xylan oligosaccharides. Also has alpha-glucosidase activity against p-nitrophenyl-alpha-D-glucopyranoside. No activity against p-nitrophenyl-D-xyloside. The protein is Alpha-xylosidase 1 of Arabidopsis thaliana (Mouse-ear cress).